Here is a 97-residue protein sequence, read N- to C-terminus: Large ribosomal subunit protein bL36m (97 aa).

Belongs to the bacterial ribosomal protein bL36 family. In terms of assembly, component of the mitochondrial ribosome large subunit (39S) which comprises a 16S rRNA and about 50 distinct proteins.

It localises to the mitochondrion. This Rattus norvegicus (Rat) protein is Large ribosomal subunit protein bL36m (Mrpl36).